The sequence spans 214 residues: Probable GTP-binding protein EngB (214 aa).

The region spanning 31–214 is the EngB-type G domain; it reads GPPEIAFAGR…LRAAILQTIA (184 aa). GTP contacts are provided by residues 39–46, 66–70, 93–96, 160–163, and 194–196; these read GRSNVGKS, GRTQE, DMPG, TKSD, and TSS. Mg(2+)-binding residues include S46 and T68.

Belongs to the TRAFAC class TrmE-Era-EngA-EngB-Septin-like GTPase superfamily. EngB GTPase family. The cofactor is Mg(2+).

Functionally, necessary for normal cell division and for the maintenance of normal septation. In Bartonella tribocorum (strain CIP 105476 / IBS 506), this protein is Probable GTP-binding protein EngB.